A 209-amino-acid chain; its full sequence is Mitochondrial import inner membrane translocase subunit Tim23 (209 aa).

A run of 3 helical transmembrane segments spans residues 73-93, 125-145, and 172-194; these read FELA…FGAM, ALWA…GVII, and GGLR…YALY.

It belongs to the Tim17/Tim22/Tim23 family. In terms of assembly, component of the TIM23 complex at least composed of TIMM23, TIMM17 (TIMM17A or TIMM17B) and TIMM50; within this complex, directly interacts with TIMM50. The complex interacts with the TIMM44 component of the PAM complex and with DNAJC15. Upon mitochondrial depolarization, interacts with PINK1; the interaction is required for PINK1 accumulation at the outer mitochondrial membrane, kinase activation by autophosphorylation and PRKN recruitement to mitochondria.

The protein localises to the mitochondrion inner membrane. In terms of biological role, essential component of the TIM23 complex, a complex that mediates the translocation of transit peptide-containing proteins across the mitochondrial inner membrane. Has a role in the activation of stress-induced mitophagy by protecting PINK1 from OMA1-mediated degradation and facilitating its accumulation at the outer mitochondrial membrane in response to depolarization. In Pongo abelii (Sumatran orangutan), this protein is Mitochondrial import inner membrane translocase subunit Tim23 (TIMM23).